We begin with the raw amino-acid sequence, 397 residues long: Protein shisa-8 (397 aa).

Positions 1–38 (MARAGARGLLGGRRPPGLRLALALRLALLLARPPSGRA) are cleaved as a signal peptide. Residues 39–138 (GAPEAQGPAA…APRDPGRERS (100 aa)) are Extracellular-facing. N-linked (GlcNAc...) asparagine glycosylation is present at Asn75. Positions 117 to 136 (TGRPPARARDTAAPRDPGRE) are disordered. The segment covering 123 to 136 (RARDTAAPRDPGRE) has biased composition (basic and acidic residues). The chain crosses the membrane as a helical span at residues 139 to 159 (HTAVYAVCGVAALLVLAGIGA). Residues 160-397 (RLGLERAHSP…RTNSKTEVTV (238 aa)) are Cytoplasmic-facing. 2 disordered regions span residues 182-250 (LLKQ…GGSL) and 281-303 (FPAL…PDLP). Pro residues-rich tracts occupy residues 188–197 (PQEPLPPTLG) and 288–303 (PRQP…PDLP).

This sequence belongs to the shisa family. Interacts with AMPAR subunits GRIA1 and GRIA2.

It localises to the membrane. Functionally, may regulate trafficking and current kinetics of AMPA-type glutamate receptor (AMPAR) at synapses. The sequence is that of Protein shisa-8 from Homo sapiens (Human).